Here is a 661-residue protein sequence, read N- to C-terminus: CD180 antigen (661 aa).

Residues 1–20 (MAPDISCFFLVALFLASCRA) form the signal peptide. Topologically, residues 21–626 (TTSSDQKCIE…RLSDVTLSCS (606 aa)) are extracellular. The LRRNT domain maps to 33–53 (VNKTYNCENLGLNEIPGTLPN). N-linked (GlcNAc...) asparagine glycans are attached at residues asparagine 34, asparagine 53, asparagine 70, and asparagine 78. LRR repeat units lie at residues 54 to 75 (STEC…TFSR), 78 to 99 (NLTF…TFQS), 102 to 123 (RLDT…ALSG), 126 to 147 (ALKH…PLHN), 150 to 171 (TLES…KGFP), 174 to 195 (KLKV…DMSS), and 201 to 221 (NLSL…AFDS). N-linked (GlcNAc...) asparagine glycosylation is found at asparagine 201, asparagine 244, and asparagine 288. LRR repeat units lie at residues 275–296 (SVES…TFHC), 299–321 (GLQE…VGLS), 322–343 (TLKK…SASN), 346–366 (SLTH…TGCL), and 371–391 (NLRE…CNLQ). Asparagine 394 and asparagine 402 each carry an N-linked (GlcNAc...) asparagine glycan. LRR repeat units lie at residues 397 to 418 (HLQS…AFKE), 421 to 442 (QLEL…SPFQ), 446 to 466 (LLKV…QLFD), 470 to 493 (ALQH…NSLQ), 497 to 518 (RLEI…AFTS), 521 to 544 (MMNH…SHLK), and 546 to 566 (IYLN…LPIL). An N-linked (GlcNAc...) asparagine glycan is attached at asparagine 451. The 51-residue stretch at 577–627 (NPLDCTCSNIYFLEWYKENMQKLEDTEDTLCENPPLLRGVRLSDVTLSCSM) folds into the LRRCT domain. Residues 627 to 650 (MAAVGIFFLIVFLLVFAILLIFAV) form a helical membrane-spanning segment. The Cytoplasmic segment spans residues 651–661 (KYFLRWKYQHI).

This sequence belongs to the Toll-like receptor family. In terms of assembly, M-shaped tetramer of two CD180-LY86 heterodimers. B-lymphocytes and spleen. Not detected in thymus, kidney, muscle, heart, brain or liver.

It is found in the cell membrane. Its function is as follows. May cooperate with MD-1 and TLR4 to mediate the innate immune response to bacterial lipopolysaccharide (LPS) in B-cells. Leads to NF-kappa-B activation. Also involved in the life/death decision of B-cells. The protein is CD180 antigen (Cd180) of Mus musculus (Mouse).